The sequence spans 423 residues: Adenylosuccinate synthetase (423 aa).

GTP contacts are provided by residues 13 to 19 (GDEGKGK) and 41 to 43 (GHT). The active-site Proton acceptor is the Asp-14. 2 residues coordinate Mg(2+): Asp-14 and Gly-41. IMP contacts are provided by residues 14–17 (DEGK), 39–42 (NAGH), Thr-130, Arg-144, Gln-223, Thr-238, and Arg-302. The active-site Proton donor is the His-42. Substrate is bound at residue 298 to 304 (SVTGRKR). Residues Arg-304 and 410 to 412 (SVG) contribute to the GTP site.

Belongs to the adenylosuccinate synthetase family. In terms of assembly, homodimer. Requires Mg(2+) as cofactor.

The protein localises to the cytoplasm. The catalysed reaction is IMP + L-aspartate + GTP = N(6)-(1,2-dicarboxyethyl)-AMP + GDP + phosphate + 2 H(+). Its pathway is purine metabolism; AMP biosynthesis via de novo pathway; AMP from IMP: step 1/2. Plays an important role in the de novo pathway of purine nucleotide biosynthesis. Catalyzes the first committed step in the biosynthesis of AMP from IMP. This chain is Adenylosuccinate synthetase, found in Porphyromonas gingivalis (strain ATCC BAA-308 / W83).